Here is a 260-residue protein sequence, read N- to C-terminus: Putative sgc region transcriptional regulator (260 aa).

In terms of domain architecture, HTH deoR-type spans 5 to 61 (RPDRIKQMLHYLWQHRHLSTQQAMELFGYAEATVRRDFQYIVNQYPGMIRGHGCLDF). The segment at residues 22–41 (LSTQQAMELFGYAEATVRRD) is a DNA-binding region (H-T-H motif).

In terms of biological role, putative transcriptional regulator for the sgcREAQCX region. This Escherichia coli (strain K12) protein is Putative sgc region transcriptional regulator (sgcR).